The primary structure comprises 314 residues: Olfactory receptor 5B12 (314 aa).

Residues 1–23 are Extracellular-facing; it reads MENNTEVTEFILVGLTDDPELQI. The N-linked (GlcNAc...) asparagine glycan is linked to N3. The chain crosses the membrane as a helical span at residues 24 to 44; that stretch reads PLFIVFLFIYLITLVGNLGMI. The Cytoplasmic portion of the chain corresponds to 45 to 52; that stretch reads ELILLDSC. Residues 53 to 73 traverse the membrane as a helical segment; sequence LHTPMYFFLSNLSLVDFGYSS. At 74-97 the chain is on the extracellular side; sequence AVTPKVMVGFLTGDKFILYNACAT. C95 and C187 are disulfide-bonded. The helical transmembrane segment at 98–118 threads the bilayer; sequence QFFFFVAFITAESFLLASMAY. The Cytoplasmic segment spans residues 119-137; sequence DRYAALCKPLHYTTTMTTN. The helical transmembrane segment at 138–158 threads the bilayer; the sequence is VCACLAIGSYICGFLNASIHT. Residues 159 to 194 lie on the Extracellular side of the membrane; it reads GNTFRLSFCRSNVVEHFFCDAPPLLTLSCSDNYISE. Residues 195 to 215 form a helical membrane-spanning segment; it reads MVIFFVVGFNDLFSILVILIS. The Cytoplasmic segment spans residues 216-235; sequence YLFIFITIMKMRSPEGRQKA. A helical transmembrane segment spans residues 236–256; it reads FSTCASHLTAVSIFYGTGIFM. The Extracellular portion of the chain corresponds to 257–269; it reads YLRPNSSHFMGTD. N261 carries N-linked (GlcNAc...) asparagine glycosylation. A helical membrane pass occupies residues 270 to 290; it reads KMASVFYAIVIPMLNPLVYSL. Over 291-314 the chain is Cytoplasmic; the sequence is RNKEVKSAFKKTVGKAKASIGFIF.

This sequence belongs to the G-protein coupled receptor 1 family.

It localises to the cell membrane. In terms of biological role, odorant receptor. The chain is Olfactory receptor 5B12 (OR5B12) from Homo sapiens (Human).